The primary structure comprises 788 residues: Protein FAR1-RELATED SEQUENCE 5 (788 aa).

The region spanning 87-179 (AFYNSYARRI…VKDHNHELVP (93 aa)) is the FAR1 domain. The 97-residue stretch at 299–395 (TVTFDTTYRS…CKWHILKKCQ (97 aa)) folds into the MULE domain. An SWIM-type zinc finger spans residues 584–616 (FNVLEMRANCSCQMFEFSGIICRHILAVFRVTN). Residues 713–733 (SSVTGGKHQQEVLAQPEPEDE) form a disordered region. The stretch at 731–768 (EDEMDKKINQLRNELELANRKCEAYRTNLLSVLKEMED) forms a coiled coil.

It belongs to the FHY3/FAR1 family. Expressed in hypocotyls, rosette and cauline leaves, inflorescences stems, flowers and siliques.

It localises to the nucleus. In terms of biological role, putative transcription activator involved in regulating light control of development. This Arabidopsis thaliana (Mouse-ear cress) protein is Protein FAR1-RELATED SEQUENCE 5 (FRS5).